A 146-amino-acid polypeptide reads, in one-letter code: Ribosome-binding factor A (146 aa).

The tract at residues 125–146 (RDLDADDDKTKDDRAKDDKDSE) is disordered.

This sequence belongs to the RbfA family. In terms of assembly, monomer. Binds 30S ribosomal subunits, but not 50S ribosomal subunits or 70S ribosomes.

Its subcellular location is the cytoplasm. In terms of biological role, one of several proteins that assist in the late maturation steps of the functional core of the 30S ribosomal subunit. Associates with free 30S ribosomal subunits (but not with 30S subunits that are part of 70S ribosomes or polysomes). Required for efficient processing of 16S rRNA. May interact with the 5'-terminal helix region of 16S rRNA. This is Ribosome-binding factor A from Mesorhizobium japonicum (strain LMG 29417 / CECT 9101 / MAFF 303099) (Mesorhizobium loti (strain MAFF 303099)).